Consider the following 465-residue polypeptide: Methionine aminopeptidase 2-2 (465 aa).

Residues 1–11 (MGSKTPHNHRR) show a composition bias toward basic residues. The disordered stretch occupies residues 1 to 89 (MGSKTPHNHR…KKKKNTKELE (89 aa)). A compositionally biased stretch (acidic residues) spans 43 to 54 (GESEGGEDEDDD). Basic residues predominate over residues 73–84 (RNKRKKKKKKKN). His217 is a substrate binding site. A divalent metal cation-binding residues include Asp238, Asp249, and His318. His326 is a substrate binding site. Residues Glu351 and Glu446 each coordinate a divalent metal cation.

It belongs to the peptidase M24A family. Methionine aminopeptidase eukaryotic type 2 subfamily. It depends on Co(2+) as a cofactor. Requires Zn(2+) as cofactor. The cofactor is Mn(2+). Fe(2+) serves as cofactor.

The protein localises to the cytoplasm. The catalysed reaction is Release of N-terminal amino acids, preferentially methionine, from peptides and arylamides.. Its function is as follows. Cotranslationally removes the N-terminal methionine from nascent proteins. The N-terminal methionine is often cleaved when the second residue in the primary sequence is small and uncharged (Met-Ala-, Cys, Gly, Pro, Ser, Thr, or Val). In Ajellomyces capsulatus (strain G186AR / H82 / ATCC MYA-2454 / RMSCC 2432) (Darling's disease fungus), this protein is Methionine aminopeptidase 2-2.